Reading from the N-terminus, the 272-residue chain is Indole-3-glycerol phosphate synthase (272 aa).

The protein belongs to the TrpC family.

It carries out the reaction 1-(2-carboxyphenylamino)-1-deoxy-D-ribulose 5-phosphate + H(+) = (1S,2R)-1-C-(indol-3-yl)glycerol 3-phosphate + CO2 + H2O. It functions in the pathway amino-acid biosynthesis; L-tryptophan biosynthesis; L-tryptophan from chorismate: step 4/5. This Mycobacterium leprae (strain Br4923) protein is Indole-3-glycerol phosphate synthase.